We begin with the raw amino-acid sequence, 374 residues long: Alcohol dehydrogenase class-3 (374 aa).

A2 is modified (N-acetylalanine). The Zn(2+) site is built by C45, H67, C97, C100, C103, C111, and C174. K233 bears the N6-succinyllysine mark. Phosphoserine is present on S247. Residue K315 is modified to N6-succinyllysine. Phosphoserine occurs at positions 324 and 351.

The protein belongs to the zinc-containing alcohol dehydrogenase family. Class-III subfamily. Homodimer. Requires Zn(2+) as cofactor. As to expression, ubiquitous.

It localises to the cytoplasm. It catalyses the reaction a primary alcohol + NAD(+) = an aldehyde + NADH + H(+). The catalysed reaction is a secondary alcohol + NAD(+) = a ketone + NADH + H(+). The enzyme catalyses S-(hydroxymethyl)glutathione + NADP(+) = S-formylglutathione + NADPH + H(+). It carries out the reaction S-(hydroxymethyl)glutathione + NAD(+) = S-formylglutathione + NADH + H(+). It catalyses the reaction 20-oxo-(5Z,8Z,11Z,14Z)-eicosatetraenoate + NAD(+) + H2O = (5Z,8Z,11Z,14Z)-eicosatetraenedioate + NADH + 2 H(+). The catalysed reaction is 20-hydroxy-(5Z,8Z,11Z,14Z)-eicosatetraenoate + NAD(+) = 20-oxo-(5Z,8Z,11Z,14Z)-eicosatetraenoate + NADH + H(+). The enzyme catalyses S-nitrosoglutathione + NADH + H(+) = S-(hydroxysulfenamide)glutathione + NAD(+). Catalyzes the oxidation of long-chain primary alcohols and the oxidation of S-(hydroxymethyl) glutathione. Also oxidizes long chain omega-hydroxy fatty acids, such as 20-HETE, producing both the intermediate aldehyde, 20-oxoarachidonate and the end product, a dicarboxylic acid, (5Z,8Z,11Z,14Z)-eicosatetraenedioate. Class-III ADH is remarkably ineffective in oxidizing ethanol. Required for clearance of cellular formaldehyde, a cytotoxic and carcinogenic metabolite that induces DNA damage. Also acts as a S-nitroso-glutathione reductase by catalyzing the NADH-dependent reduction of S-nitrosoglutathione, thereby regulating protein S-nitrosylation. The chain is Alcohol dehydrogenase class-3 from Mus musculus (Mouse).